The following is a 225-amino-acid chain: Cardiotrophin-like cytokine factor 1 (225 aa).

An N-terminal signal peptide occupies residues 1-27 (MDLRAGDSWGMLACLCTVLWHLPAVPA). Asn29 is a glycosylation site (N-linked (GlcNAc...) asparagine).

This sequence belongs to the IL-6 superfamily. In terms of assembly, forms a heteromeric complex with cardiotrophin-like cytokine CRLF1/CLF-1; the CRLF1-CLCF1 complex is a ligand for the ciliary neurotrophic factor receptor/CNTFR. The CRLF1-CLCF1 heterodimer binds SORL1 (via N-terminal ectodomain); within this complex, the interaction is mediated predominantly by the CRLF1 moiety. The tripartite signaling complex formed by CRLF1, CLCF1 and CNTFR also binds SORL1.

It is found in the secreted. In terms of biological role, in complex with CRLF1, forms a heterodimeric neurotropic cytokine that plays a crucial role during neuronal development. Also stimulates B-cells. Binds to and activates the ILST/gp130 receptor. This chain is Cardiotrophin-like cytokine factor 1 (Clcf1), found in Mus musculus (Mouse).